The primary structure comprises 605 residues: Copper resistance protein A (605 aa).

The tat-type signal signal peptide spans 1-41; it reads MLLKTSRRTFLKGLTLSGVAGSLGVWSFNARSSLSLPVAAS. Positions 100, 102, 142, and 144 each coordinate Cu cation. 3 consecutive repeat copies span residues 382–389, 414–421, and 422–429. Positions 382–429 are 3 X 8 AA tandem repeats of D-H-X-X-M-X-G-M; it reads DHSQMGGMDNSGEMMSMDGADLPDSGTSSAPMDHSSMAGMDHSRMAGM. 8 residues coordinate Cu cation: His-538, His-541, His-543, His-586, Cys-587, His-588, His-592, and Met-597.

It belongs to the multicopper oxidase family. CopA subfamily. In terms of processing, predicted to be exported by the Tat system. The position of the signal peptide cleavage has not been experimentally proven.

The protein resides in the periplasm. Functionally, required for the copper-inducible expression of copper resistance. May have oxidase activity. This is Copper resistance protein A (pcoA) from Escherichia coli.